The chain runs to 547 residues: 2-succinyl-5-enolpyruvyl-6-hydroxy-3-cyclohexene-1-carboxylate synthase (547 aa).

This sequence belongs to the TPP enzyme family. MenD subfamily. As to quaternary structure, homodimer. It depends on Mg(2+) as a cofactor. Mn(2+) is required as a cofactor. Requires thiamine diphosphate as cofactor.

The enzyme catalyses isochorismate + 2-oxoglutarate + H(+) = 5-enolpyruvoyl-6-hydroxy-2-succinyl-cyclohex-3-ene-1-carboxylate + CO2. The protein operates within quinol/quinone metabolism; 1,4-dihydroxy-2-naphthoate biosynthesis; 1,4-dihydroxy-2-naphthoate from chorismate: step 2/7. It participates in quinol/quinone metabolism; menaquinone biosynthesis. Catalyzes the thiamine diphosphate-dependent decarboxylation of 2-oxoglutarate and the subsequent addition of the resulting succinic semialdehyde-thiamine pyrophosphate anion to isochorismate to yield 2-succinyl-5-enolpyruvyl-6-hydroxy-3-cyclohexene-1-carboxylate (SEPHCHC). The chain is 2-succinyl-5-enolpyruvyl-6-hydroxy-3-cyclohexene-1-carboxylate synthase from Mycobacterium sp. (strain KMS).